Reading from the N-terminus, the 607-residue chain is Polypeptide N-acetylgalactosaminyltransferase 18 (607 aa).

Topologically, residues 1-12 (MVCTRKTKTLVS) are cytoplasmic. The helical; Signal-anchor for type II membrane protein transmembrane segment at 13–35 (TCVILSGMTNIICLLYVGWVTNY) threads the bilayer. The Lumenal segment spans residues 36–607 (IASVYVRGQE…ITNVLRSLAS (572 aa)). Intrachain disulfides connect cysteine 144–cysteine 377, cysteine 368–cysteine 447, cysteine 482–cysteine 498, cysteine 530–cysteine 543, and cysteine 571–cysteine 591. An N-linked (GlcNAc...) asparagine glycan is attached at asparagine 146. The interval 153–267 (LPEVSIVFIF…VGWAEPVLTR (115 aa)) is catalytic subdomain A. Substrate is bound at residue aspartate 194. An N-linked (GlcNAc...) asparagine glycan is attached at asparagine 195. Mn(2+) contacts are provided by aspartate 251 and histidine 253. A glycan (N-linked (GlcNAc...) asparagine) is linked at asparagine 320. The segment at 324–385 (PIRSPALIGC…PCSRIAHIER (62 aa)) is catalytic subdomain B. Histidine 382 serves as a coordination point for Mn(2+). Substrate contacts are provided by arginine 385 and tyrosine 390. The 131-residue stretch at 469 to 599 (AYGVLQNSLK…KCSGQHWSIT (131 aa)) folds into the Ricin B-type lectin domain.

Belongs to the glycosyltransferase 2 family. GalNAc-T subfamily. Mn(2+) is required as a cofactor.

The protein resides in the golgi apparatus membrane. The enzyme catalyses L-seryl-[protein] + UDP-N-acetyl-alpha-D-galactosamine = a 3-O-[N-acetyl-alpha-D-galactosaminyl]-L-seryl-[protein] + UDP + H(+). The catalysed reaction is L-threonyl-[protein] + UDP-N-acetyl-alpha-D-galactosamine = a 3-O-[N-acetyl-alpha-D-galactosaminyl]-L-threonyl-[protein] + UDP + H(+). The protein operates within protein modification; protein glycosylation. Catalyzes the initial reaction in O-linked oligosaccharide biosynthesis, the transfer of an N-acetyl-D-galactosamine (GalNAc) residue from UDP-GalNAc to a serine or threonine residue on the protein receptor. The protein is Polypeptide N-acetylgalactosaminyltransferase 18 (GALNT18) of Homo sapiens (Human).